We begin with the raw amino-acid sequence, 25 residues long: Alpha-amylase inhibitor (25 aa).

Monomer or homodimer. May exist both in a glycosylated and in an unglycosylated form.

It is found in the secreted. In terms of biological role, inhibits alpha-amylases but not trypsin. Is more effective against insect alpha-amylases than those of mammals. In Secale cereale (Rye), this protein is Alpha-amylase inhibitor.